Consider the following 496-residue polypeptide: Fibronectin type III and SPRY domain-containing protein 1 (496 aa).

A coiled-coil region spans residues 4–99 (QREALRKIIK…ALESSEELLE (96 aa)). A COS domain is found at 105 to 162 (LQAMDSEDFPQAAKQIKDGVTMAPAFRLSLKAKVSDNMSHLMVDFAQERQMLQALKFL). One can recognise a Fibronectin type-III domain in the interval 164–268 (VPSAPVIDLA…EPVTLETPAF (105 aa)). Positions 268–477 (FMFRLDASTS…VTTGLQVPSA (210 aa)) constitute a B30.2/SPRY domain. A disordered region spans residues 301 to 336 (KAREKDGKGRTASPINSPARGTPSPKRMPSGRGGRD). Omega-N-methylarginine occurs at positions 310 and 320.

Oligomerization is required for binding to microtubules. Highly expressed in brain tissues, including cerebellum, cerebral cortex, medulla, occipital pole, frontal lobe, temporal lobe and putamen. Lower expression in spinal cord.

Its subcellular location is the cytoplasm. It is found in the cytoskeleton. The protein resides in the microtubule organizing center. The protein localises to the centrosome. It localises to the nucleus. Its subcellular location is the cleavage furrow. Functionally, may be involved in microtubule organization and stabilization. The chain is Fibronectin type III and SPRY domain-containing protein 1 (FSD1) from Homo sapiens (Human).